Here is a 433-residue protein sequence, read N- to C-terminus: tRNA (guanine(10)-N(2))-methyltransferase (433 aa).

This sequence belongs to the class I-like SAM-binding methyltransferase superfamily. TRM11 methyltransferase family. Interacts with TRM112.

Its subcellular location is the cytoplasm. It catalyses the reaction guanosine(10) in tRNA + S-adenosyl-L-methionine = N(2)-methylguanosine(10) in tRNA + S-adenosyl-L-homocysteine + H(+). Its function is as follows. Catalytic subunit of an S-adenosyl-L-methionine-dependent tRNA methyltransferase complex that mediates the methylation of the guanosine nucleotide at position 10 (m2G10) in tRNAs. In Saccharomyces cerevisiae (strain ATCC 204508 / S288c) (Baker's yeast), this protein is tRNA (guanine(10)-N(2))-methyltransferase (TRM11).